The chain runs to 101 residues: Protein translation factor SUI1 homolog (101 aa).

This sequence belongs to the SUI1 family.

The sequence is that of Protein translation factor SUI1 homolog from Methanoregula boonei (strain DSM 21154 / JCM 14090 / 6A8).